The sequence spans 471 residues: NADH-quinone oxidoreductase subunit N (471 aa).

Helical transmembrane passes span 6–26 (FILP…LGVY), 30–50 (SSNI…ILIF), 70–90 (LSSF…SIST), 98–118 (IFLI…MVMI), 123–143 (LMVF…LASF), 158–178 (FVLS…VYGF), 198–218 (LTFG…AVPF), 230–250 (PTAV…TVFI), 264–284 (WQPI…IAAI), 292–312 (LIAY…STGS), 320–340 (IVYM…LLML), 365–385 (LSLL…GFFA), 400–420 (FLAI…LKII), and 438–458 (IWLK…FIFP).

Belongs to the complex I subunit 2 family. In terms of assembly, NDH-1 is composed of 14 different subunits. Subunits NuoA, H, J, K, L, M, N constitute the membrane sector of the complex.

It localises to the cell inner membrane. The enzyme catalyses a quinone + NADH + 5 H(+)(in) = a quinol + NAD(+) + 4 H(+)(out). NDH-1 shuttles electrons from NADH, via FMN and iron-sulfur (Fe-S) centers, to quinones in the respiratory chain. The immediate electron acceptor for the enzyme in this species is believed to be ubiquinone. Couples the redox reaction to proton translocation (for every two electrons transferred, four hydrogen ions are translocated across the cytoplasmic membrane), and thus conserves the redox energy in a proton gradient. The chain is NADH-quinone oxidoreductase subunit N from Pelagibacter ubique (strain HTCC1062).